The primary structure comprises 1163 residues: Leptin receptor (1163 aa).

Residues 1 to 21 form the signal peptide; it reads MICQKFCVVLLHWEFICVITA. Residues 22–837 lie on the Extracellular side of the membrane; it reads FNLSYPITPW…QDNTEKHQND (816 aa). N-linked (GlcNAc...) asparagine glycosylation is found at N23, N41, N56, N71, N79, N96, and N114. 2 disulfide bridges follow: C37/C88 and C87/C97. 2 disulfides stabilise this stretch: C129-C140 and C184-C194. N-linked (GlcNAc...) asparagine glycans are attached at residues N185, N204, N274, N345, and N395. The 95-residue stretch at 237 to 331 folds into the Fibronectin type-III 1 domain; that stretch reads PPLGLRMEIT…TPHVFTTQDV (95 aa). 2 disulfides stabilise this stretch: C350–C410 and C411–C416. The N-linked (GlcNAc...) asparagine glycan is linked to N431. Intrachain disulfides connect C434–C445, C471–C526, and C486–C496. Residues 465–482 are leptin-binding; it reads RRSSLYCFDIPSIHPISK. Fibronectin type-III domains lie at 537–632, 637–730, and 738–831; these read PPSS…TVVM, PMRG…LTFS, and IVQS…QDNT. The short motif at 620–624 is the WSXWS motif element; sequence WSNWS. N622, N657, N668, N686, N695, N726, and N748 each carry an N-linked (GlcNAc...) asparagine glycan. A helical transmembrane segment spans residues 838–860; it reads AGLYVIVPVIISSSILLLGTLLI. Over 861-1163 the chain is Cytoplasmic; it reads LHQRMKKLFW…MENKMCDLTV (303 aa). The Box 1 motif motif lies at 869 to 877; that stretch reads FWEDVPNPK. S880 carries the post-translational modification Phosphoserine. The interval 891–896 is required for JAK2 activation; the sequence is ETFEHL. The tract at residues 896–904 is required for STAT3 phosphorylation; sequence LFIKHTASV. Y984 is modified (phosphotyrosine; by JAK2). Phosphotyrosine is present on Y1077. Y1139 bears the Phosphotyrosine; by JAK2 mark.

Belongs to the type I cytokine receptor family. Type 2 subfamily. Present as a mixture of monomers and dimers. The phosphorylated receptor binds a number of SH2 domain-containing proteins such as JAK2, STAT3, PTPN11, and SOCS3. Interaction with SOCS3 inhibits JAK/STAT signaling and MAPK cascade. On ligand binding, phosphorylated on two conserved C-terminal tyrosine residues (isoform B only) by JAK2. Tyr-984 is required for complete binding and activation of PTPN11, ERK/FOS activation and, for interaction with SOCS3. Phosphorylation on Tyr-1139 is required for STAT3 binding/activation. In terms of processing, on ligand binding, phosphorylated on two conserved C-terminal tyrosine residues (isoform B only) by JAK2. Tyr-984 is required for complete binding and activation of PTPN11, ERK/FOS activation,for interaction with SOCS3 and SOCS3 mediated inhibition of leptin signaling. Phosphorylation on Tyr-1139 is required for STAT3 binding/activation. Phosphorylation of Tyr-1077 has a more accessory role. As to expression, widely expressed. High expression of isoform B in liver, adipose tissue, hypothalamus and choroid plexus.

It is found in the cell membrane. It localises to the basolateral cell membrane. Its function is as follows. Receptor for hormone LEP/leptin. On ligand binding, mediates LEP central and peripheral effects through the activation of different signaling pathways such as JAK2/STAT3 and MAPK cascade/FOS. In the hypothalamus, LEP acts as an appetite-regulating factor that induces a decrease in food intake and an increase in energy consumption by inducing anorexinogenic factors and suppressing orexigenic neuropeptides, also regulates bone mass and secretion of hypothalamo-pituitary-adrenal hormones. In the periphery, increases basal metabolism, influences reproductive function, regulates pancreatic beta-cell function and insulin secretion, is pro-angiogenic and affects innate and adaptive immunity. Control of energy homeostasis and melanocortin production (stimulation of POMC and full repression of AgRP transcription) is mediated by STAT3 signaling, whereas distinct signals regulate NPY and the control of fertility, growth and glucose homeostasis. Involved in the regulation of counter-regulatory response to hypoglycemia by inhibiting neurons of the parabrachial nucleus. Has a specific effect on T lymphocyte responses, differentially regulating the proliferation of naive and memory T-cells. Leptin increases Th1 and suppresses Th2 cytokine production. In terms of biological role, may transport LEP across the blood-brain barrier. Binds LEP and mediates LEP endocytosis. Does not induce phosphorylation of and activate STAT3. The chain is Leptin receptor (LEPR) from Macaca mulatta (Rhesus macaque).